We begin with the raw amino-acid sequence, 210 residues long: Prolactin (210 aa).

Residues 1–23 form the signal peptide; sequence MAEGSRLYFAVTVLMCAFVSING. 2 cysteine pairs are disulfide-bonded: Cys69/Cys183 and Cys200/Cys210.

Belongs to the somatotropin/prolactin family. Pituitary gland.

Its subcellular location is the secreted. This is Prolactin (prl) from Hypophthalmichthys nobilis (Bighead carp).